The chain runs to 159 residues: 2-C-methyl-D-erythritol 2,4-cyclodiphosphate synthase (159 aa).

Positions 8 and 10 each coordinate a divalent metal cation. 4-CDP-2-C-methyl-D-erythritol 2-phosphate-binding positions include 8–10 (DVH) and 34–35 (HS). His42 contributes to the a divalent metal cation binding site. Residues 56–58 (DIG), 61–65 (FPDTD), 132–135 (TTTE), Phe139, and Arg142 contribute to the 4-CDP-2-C-methyl-D-erythritol 2-phosphate site.

Belongs to the IspF family. Homotrimer. Requires a divalent metal cation as cofactor.

The enzyme catalyses 4-CDP-2-C-methyl-D-erythritol 2-phosphate = 2-C-methyl-D-erythritol 2,4-cyclic diphosphate + CMP. Its pathway is isoprenoid biosynthesis; isopentenyl diphosphate biosynthesis via DXP pathway; isopentenyl diphosphate from 1-deoxy-D-xylulose 5-phosphate: step 4/6. Functionally, involved in the biosynthesis of isopentenyl diphosphate (IPP) and dimethylallyl diphosphate (DMAPP), two major building blocks of isoprenoid compounds. Catalyzes the conversion of 4-diphosphocytidyl-2-C-methyl-D-erythritol 2-phosphate (CDP-ME2P) to 2-C-methyl-D-erythritol 2,4-cyclodiphosphate (ME-CPP) with a corresponding release of cytidine 5-monophosphate (CMP). This Syntrophobacter fumaroxidans (strain DSM 10017 / MPOB) protein is 2-C-methyl-D-erythritol 2,4-cyclodiphosphate synthase.